Here is a 705-residue protein sequence, read N- to C-terminus: Dolichyl-diphosphooligosaccharide--protein glycosyltransferase subunit STT3A (705 aa).

The Cytoplasmic segment spans residues 1–17 (MTKLGFLRLSYEKQDTL). The chain crosses the membrane as a helical span at residues 18–38 (LKLLILSMAAVLSFSTRLFAV). Topologically, residues 39 to 119 (LRFESVIHEF…IDIRNVCVFL (81 aa)) are lumenal. Positions 47 to 49 (EFD) match the DXD motif 1 motif. Asp-49 serves as a coordination point for Mn(2+). A helical membrane pass occupies residues 120-138 (APLFSSFTTIVTYHLTKEL). Topologically, residues 139–140 (KD) are cytoplasmic. A helical membrane pass occupies residues 141 to 158 (AGAGLLAAAMIAVVPGYI). The Lumenal portion of the chain corresponds to 159 to 169 (SRSVAGSYDNE). Residues Asp-167 and Glu-169 each coordinate Mn(2+). A DXD motif 2 motif is present at residues 167–169 (DNE). Residues 170–189 (GIAIFCMLLTYYMWIKAVKT) traverse the membrane as a helical segment. Residues 190 to 191 (GS) lie on the Cytoplasmic side of the membrane. The helical transmembrane segment at 192–206 (IYWAAKCALAYFYMV) threads the bilayer. Residues 207-211 (SSWGG) lie on the Lumenal side of the membrane. Residues 212–228 (YVFLINLIPLHVLVLML) form a helical membrane-spanning segment. At 229–233 (TGRFS) the chain is on the cytoplasmic side. A helical transmembrane segment spans residues 234-259 (HRIYVAYCTVYCLGTILSMQISFVGF). Topologically, residues 260–267 (QPVLSSEH) are lumenal. Residues 268–287 (MAAFGVFGLCQIHAFVDYLR) traverse the membrane as a helical segment. Residues 288-300 (SKLNPQQFEVLFR) are Cytoplasmic-facing. Residues 301–321 (SVISLVGFVLLTIGALLMLTG) traverse the membrane as a helical segment. Residues 322-356 (KISPWTGRFYSLLDPSYAKNNIPIIASVSEHQPTT) are Lumenal-facing. Residues 348–351 (SVSE) carry the SVSE motif motif. A helical membrane pass occupies residues 357–379 (WSSYYFDLQLLVFMFPVGLYYCF). Over 380–385 (SNLSDA) the chain is Cytoplasmic. A helical transmembrane segment spans residues 386 to 402 (RIFIIMYGVTSMYFSAV). At 403–406 (MVRL) the chain is on the lumenal side. Arg-405 contributes to the dolichyl diphosphooligosaccharide binding site. Residues 407–428 (MLVLAPVMCILSGIGVSQVLST) form a helical membrane-spanning segment. Topologically, residues 429-453 (YMKNLDISRQDKKSKKQQDSTYPIK) are cytoplasmic. A helical transmembrane segment spans residues 454–473 (NEVASGMILVMAFFLITYTF). The Lumenal portion of the chain corresponds to 474–705 (HSTWVTSEAY…DLDNRGLSRT (232 aa)). The segment at 525 to 527 (WWD) is interacts with target acceptor peptide in protein substrate. A WWDYG motif motif is present at residues 525-529 (WWDYG). Residue Tyr-530 participates in dolichyl diphosphooligosaccharide binding. Asn-537 and Asn-544 each carry an N-linked (GlcNAc...) asparagine glycan. Asn-548 carries N-linked (GlcNAc...) (high mannose) asparagine glycosylation. The DK motif signature appears at 592-599 (DINKFLWM).

Belongs to the STT3 family. In terms of assembly, component of the oligosaccharyltransferase (OST) complex. There are 2 OST complexes, OST-A and OST-B, which contain STT3A or STT3B as catalytic subunit, respectively. OST-A and OST-B contain common core subunits RPN1, RPN2, OST48, OST4, DAD1 and TMEM258, and OST-A contains DC2/OSTC and KRTCAP2/KCP2 specific accessory subunits. OST-A complex assembly occurs through the formation of 3 subcomplexes. Subcomplex 1 contains RPN1 and TMEM258, subcomplex 2 contains the OST-A-specific subunits STT3A, DC2/OSTC, and KCP2 as well as the core subunit OST4, and subcomplex 3 contains RPN2, DAD1, and OST48. The OST-A complex can form stable complexes with the Sec61 complex or with both the Sec61 and TRAP complexes. Requires Mg(2+) as cofactor. It depends on Mn(2+) as a cofactor.

The protein resides in the endoplasmic reticulum membrane. The enzyme catalyses a di-trans,poly-cis-dolichyl diphosphooligosaccharide + L-asparaginyl-[protein] = N(4)-(oligosaccharide-(1-&gt;4)-N-acetyl-beta-D-glucosaminyl-(1-&gt;4)-N-acetyl-beta-D-glucosaminyl)-L-asparaginyl-[protein] + a di-trans,poly-cis-dolichyl diphosphate + H(+). It functions in the pathway protein modification; protein glycosylation. Functionally, catalytic subunit of the oligosaccharyl transferase (OST) complex that catalyzes the initial transfer of a defined glycan (Glc(3)Man(9)GlcNAc(2) in eukaryotes) from the lipid carrier dolichol-pyrophosphate to an asparagine residue within an Asn-X-Ser/Thr consensus motif in nascent polypeptide chains, the first step in protein N-glycosylation. N-glycosylation occurs cotranslationally and the complex associates with the Sec61 complex at the channel-forming translocon complex that mediates protein translocation across the endoplasmic reticulum (ER). All subunits are required for a maximal enzyme activity. This subunit contains the active site and the acceptor peptide and donor lipid-linked oligosaccharide (LLO) binding pockets. STT3A is present in the majority of OST complexes and mediates cotranslational N-glycosylation of most sites on target proteins, while STT3B-containing complexes are required for efficient post-translational glycosylation and mediate glycosylation of sites that have been skipped by STT3A. STT3A-containing OST-A complex is also required to prevent hyperglycosylation of some target proteins by preventing glycosylation of facultative sites before folding of target proteins is completed. This Bos taurus (Bovine) protein is Dolichyl-diphosphooligosaccharide--protein glycosyltransferase subunit STT3A.